Here is a 109-residue protein sequence, read N- to C-terminus: UPF0060 membrane protein RC1_3291 (109 aa).

A run of 4 helical transmembrane segments spans residues 4–24 (IATY…FWAW), 31–51 (PLWL…LTRI), 59–79 (AYAA…WLVE), and 88–108 (TLGT…PRGG).

Belongs to the UPF0060 family.

It is found in the cell inner membrane. The protein is UPF0060 membrane protein RC1_3291 of Rhodospirillum centenum (strain ATCC 51521 / SW).